The chain runs to 3169 residues: FRAS1-related extracellular matrix protein 2 (3169 aa).

A disordered region spans residues 1–24 (MHSAGTPGLSSRRTGNSTSFQPGP). The first 46 residues, 1 to 46 (MHSAGTPGLSSRRTGNSTSFQPGPPPPPRLLLLLLLLLSLVSRVPA), serve as a signal peptide directing secretion. Over residues 8 to 21 (GLSSRRTGNSTSFQ) the composition is skewed to polar residues. Residues 47-3113 (QPAAFGRALL…SPSSAVSLVT (3067 aa)) are Extracellular-facing. CSPG repeat units lie at residues 319 to 413 (KPSF…LELE), 438 to 537 (APVV…LRMV), 560 to 675 (PPVL…FRVQ), 700 to 807 (PPEL…FQVE), 828 to 919 (QPPE…LEVS), 945 to 1037 (HPTG…LSLS), 1066 to 1168 (APEI…FRCS), 1189 to 1282 (EQPE…IKLT), 1303 to 1399 (TPRM…FDVT), 1420 to 1512 (VFPD…FQVT), 1532 to 1621 (KKPV…FTVT), and 1655 to 1752 (VPQI…FAVE). Asn358 is a glycosylation site (N-linked (GlcNAc...) asparagine). Residues Asn1244 and Asn1369 are each glycosylated (N-linked (GlcNAc...) asparagine). Asn1584 and Asn1741 each carry an N-linked (GlcNAc...) asparagine glycan. Calx-beta domains follow at residues 1759–1858 (LTYQ…VVLS), 1871–1982 (ATVE…VLLS), 1997–2103 (QVTI…LVLR), 2118–2220 (VSIN…LVLG), and 2238–2342 (TLIR…VHLK). Residues 3036-3057 (SLVSQGKPQSTTKSRKKREIRS) are disordered. Residues 3037–3047 (LVSQGKPQSTT) are compositionally biased toward polar residues. A helical membrane pass occupies residues 3114 to 3134 (VVGGTTVGLLTICLTVIAVLM). The Cytoplasmic segment spans residues 3135–3169 (CRGKESFRGKDAPKGSSSSEPMVPPQSHHNDSSEV). The segment at 3141–3169 (FRGKDAPKGSSSSEPMVPPQSHHNDSSEV) is disordered.

Belongs to the FRAS1 family. In terms of assembly, interacts with FREM1.

It localises to the cell membrane. Functionally, extracellular matrix protein required for maintenance of the integrity of the skin epithelium and for maintenance of renal epithelia. Required for epidermal adhesion. Involved in the development of eyelids and the anterior segment of the eyeballs. The polypeptide is FRAS1-related extracellular matrix protein 2 (FREM2) (Homo sapiens (Human)).